The following is a 213-amino-acid chain: High frequency lysogenization protein HflD homolog (213 aa).

It belongs to the HflD family.

The protein localises to the cytoplasm. The protein resides in the cell inner membrane. This chain is High frequency lysogenization protein HflD homolog, found in Alcanivorax borkumensis (strain ATCC 700651 / DSM 11573 / NCIMB 13689 / SK2).